The following is an 816-amino-acid chain: Phosphatidylinositol 4-kinase beta (816 aa).

The tract at residues Met1–Leu30 is disordered. An N-acetylglycine modification is found at Gly2. The 214-residue stretch at Leu29–Ser242 folds into the PIK helical domain. Residues Ser41–Ala67 form an interaction with ACBD3 region. Disordered stretches follow at residues Glu101–Arg120 and Ala248–Ser318. Ser258 carries the post-translational modification Phosphoserine. Position 263 is a phosphothreonine (Thr263). Ser266, Ser275, Ser277, Ser284, and Ser294 each carry phosphoserine. 2 stretches are compositionally biased toward polar residues: residues Asp278–Lys297 and Ser306–Ser318. Position 428 is a phosphoserine (Ser428). Thr438 carries the post-translational modification Phosphothreonine. Ser511 carries the post-translational modification Phosphoserine. A phosphothreonine mark is found at Thr517 and Thr519. In terms of domain architecture, PI3K/PI4K catalytic spans Glu535 to Thr801. The interval Val541–Gly547 is G-loop. Residues Gln668 to Asn676 are catalytic loop. The activation loop stretch occupies residues His687 to Thr711.

It belongs to the PI3/PI4-kinase family. Type III PI4K subfamily. As to quaternary structure, interacts with ARF1 and ARF3 in the Golgi complex, but not with ARF4, ARF5 or ARF6. Interacts with NCS1/FREQ in a calcium-independent manner. Interacts with CALN1/CABP8 and CALN2/CABP7; in a calcium-dependent manner; this interaction competes with NCS1/FREQ binding. Interacts with ACBD3. Interacts with ARMH3, YWHAB, YWHAE, YWHAG, YWHAH, YWHAQ, YWHAZ and SFN. Interacts with GGA2 (via VHS domain); the interaction is important for PI4KB location at the Golgi apparatus membrane. Interacts with ATG9A. (Microbial infection) Interacts with Aichi virus protein 3A. Part of a complex Aichi virus protein 3A/ACBD3/PI4KB that allows the synthesis of PI4P at the viral RNA replication sites. It depends on Mg(2+) as a cofactor. Mn(2+) is required as a cofactor. In terms of tissue distribution, widely expressed with highest levels in heart, skeletal muscle, pancreas, testis and ovary. Weakly expressed in liver. Expressed in the innear ear in the epithelium of the spinal organ of corti.

The protein resides in the endomembrane system. It is found in the mitochondrion outer membrane. It localises to the rough endoplasmic reticulum membrane. Its subcellular location is the golgi apparatus. The protein localises to the golgi apparatus membrane. The protein resides in the cytoplasm. It is found in the perinuclear region. The catalysed reaction is a 1,2-diacyl-sn-glycero-3-phospho-(1D-myo-inositol) + ATP = a 1,2-diacyl-sn-glycero-3-phospho-(1D-myo-inositol 4-phosphate) + ADP + H(+). Inhibited by wortmannin and adenosine. Increased kinase activity upon interaction with NCS1/FREQ. Its activity is regulated as follows. (Microbial infection) Activated by Aichi virus protein 3A, this activation is sensitized by ACBD3. In terms of biological role, phosphorylates phosphatidylinositol (PI) in the first committed step in the production of the second messenger inositol-1,4,5,-trisphosphate (PIP). May regulate Golgi disintegration/reorganization during mitosis, possibly via its phosphorylation. Involved in Golgi-to-plasma membrane trafficking. May play an important role in the inner ear development. (Microbial infection) Plays an essential role in Aichi virus RNA replication. Recruited by ACBD3 at the viral replication sites. Its function is as follows. (Microbial infection) Required for cellular spike-mediated entry of human coronavirus SARS-CoV. The chain is Phosphatidylinositol 4-kinase beta from Homo sapiens (Human).